Reading from the N-terminus, the 223-residue chain is Neurotrophic factor BDNF precursor form (223 aa).

Residues 1 to 5 form the signal peptide; that stretch reads SCMKA. A propeptide spanning residues 6 to 114 is cleaved from the precursor; it reads APMKEVSIRG…AANMSMRVRR (109 aa). N-linked (GlcNAc...) asparagine glycosylation is present at N107. Cystine bridges form between C127/C194 and C172/C223.

This sequence belongs to the NGF-beta family.

It localises to the secreted. Its function is as follows. Promotes the survival of neuronal populations that are all located either in the central nervous system or directly connected to it. The sequence is that of Neurotrophic factor BDNF precursor form (BDNF) from Lichanura trivirgata (Rosy boa).